We begin with the raw amino-acid sequence, 525 residues long: MFSLQDLCRKNIFFLPNDFSKHTLQWLGLYWKEHGSVHRAEKNSIVIQNELVLSINDALQLAGEEGDTDVVQLLLLWEGNLHYAIIGALKTEKYNLICEYHSQIQDWHVLLPLIQDPETFEKCHDLSLACDFICLLQHAVKYNMLSILVKYKEDLLNVRIRYRIQSLFVLACENRRIEIIDWIGQNLPIPEPDAIFSIAVATRDLELFSLGYKIIFDYMQRQGIFQLSNGVRMVVLNRHISMAIDNGLLPFVLETLKHGGNIHRALSYAVTHNRRKILDYLIRQKNIAPNTIERLLYLAVKNQSSRKTLNLLLSYINYKVKNVKKLVEHVVNEKSTLVLKILLEKKENLVDAVLTRLVKHSTYFQVREFIQEFSISPEKFIKIAVREKKNVLIEAISEDIWENPTERITYLKQIVHTIKYESGRRFLIDIIHSIYQSYSLKHEDILKLATFYVKYNAITHFKDLCKYLWLNRGTESKKLFLECLEIADEKEFPDIKSIVSEYINYLFTAGAITKEEIMQAYDALE.

ANK repeat units follow at residues 54–83 (SIND…NLHY), 129–158 (ACDF…LLNV), 261–291 (NIHR…APNT), and 324–351 (KKLV…NLVD).

The protein belongs to the asfivirus MGF 505 family.

Plays a role in virus cell tropism, and may be required for efficient virus replication in macrophages. This is Protein MGF 505-6R from Ornithodoros (relapsing fever ticks).